Reading from the N-terminus, the 93-residue chain is MPRSLKKGPFVDDHLLKKVDVQNEKNTKQVIKTWSRRSTIIPDFIGHTFAVHDGRKHVPVFVTEAMVGHKLGEFAPTRTFKGHIKDDRKAKRR.

Belongs to the universal ribosomal protein uS19 family.

Functionally, protein S19 forms a complex with S13 that binds strongly to the 16S ribosomal RNA. The sequence is that of Small ribosomal subunit protein uS19 (rpsS) from Mycobacterium leprae (strain TN).